A 109-amino-acid chain; its full sequence is uncharacterized protein (109 aa).

The signal sequence occupies residues 1-23 (MKNYNFILISLFIIFFIILNISS). An N-linked (GlcNAc...) asparagine glycan is attached at Asn27. Residues 45–109 (YQEYMENRTP…KKDQQNQQQN (65 aa)) form a disordered region. Residues 54–72 (PNEQQQQQQQQQNNNNPPQ) show a composition bias toward low complexity. A compositionally biased stretch (basic and acidic residues) spans 94-103 (KLKEKLKKDQ).

The protein resides in the secreted. This is an uncharacterized protein from Dictyostelium discoideum (Social amoeba).